The following is a 435-amino-acid chain: 3-phosphoshikimate 1-carboxyvinyltransferase (435 aa).

The 3-phosphoshikimate site is built by Lys-21, Ser-22, and Arg-26. Residue Lys-21 coordinates phosphoenolpyruvate. Positions 98 and 126 each coordinate phosphoenolpyruvate. 3-phosphoshikimate contacts are provided by Ser-169, Ser-170, Gln-171, Ser-197, Asp-312, and Lys-339. Phosphoenolpyruvate is bound at residue Gln-171. The active-site Proton acceptor is Asp-312. Phosphoenolpyruvate-binding residues include Arg-343, Arg-386, and Lys-412.

Belongs to the EPSP synthase family. As to quaternary structure, monomer.

The protein localises to the cytoplasm. The enzyme catalyses 3-phosphoshikimate + phosphoenolpyruvate = 5-O-(1-carboxyvinyl)-3-phosphoshikimate + phosphate. It participates in metabolic intermediate biosynthesis; chorismate biosynthesis; chorismate from D-erythrose 4-phosphate and phosphoenolpyruvate: step 6/7. Functionally, catalyzes the transfer of the enolpyruvyl moiety of phosphoenolpyruvate (PEP) to the 5-hydroxyl of shikimate-3-phosphate (S3P) to produce enolpyruvyl shikimate-3-phosphate and inorganic phosphate. The protein is 3-phosphoshikimate 1-carboxyvinyltransferase of Clostridium beijerinckii (strain ATCC 51743 / NCIMB 8052) (Clostridium acetobutylicum).